A 548-amino-acid chain; its full sequence is Chaperonin GroEL (548 aa).

Residues 30–33, K51, 87–91, G415, 479–481, and D495 contribute to the ATP site; these read TLGP, DGTTT, and NAA. The segment at 524–548 is disordered; it reads LPKEDKSSDSSSSPAGGMGGMGGMM. Positions 539-548 are enriched in gly residues; sequence GGMGGMGGMM.

The protein belongs to the chaperonin (HSP60) family. In terms of assembly, forms a cylinder of 14 subunits composed of two heptameric rings stacked back-to-back. Interacts with the co-chaperonin GroES.

The protein resides in the cytoplasm. It catalyses the reaction ATP + H2O + a folded polypeptide = ADP + phosphate + an unfolded polypeptide.. Functionally, together with its co-chaperonin GroES, plays an essential role in assisting protein folding. The GroEL-GroES system forms a nano-cage that allows encapsulation of the non-native substrate proteins and provides a physical environment optimized to promote and accelerate protein folding. In Buchnera aphidicola subsp. Acyrthosiphon pisum (strain 5A), this protein is Chaperonin GroEL.